Reading from the N-terminus, the 64-residue chain is uncharacterized protein (64 aa).

To P.abyssi PAB3148.

This is an uncharacterized protein from Archaeoglobus fulgidus (strain ATCC 49558 / DSM 4304 / JCM 9628 / NBRC 100126 / VC-16).